A 63-amino-acid chain; its full sequence is Large ribosomal subunit protein bL28 (63 aa).

It belongs to the bacterial ribosomal protein bL28 family.

This chain is Large ribosomal subunit protein bL28, found in Citrifermentans bemidjiense (strain ATCC BAA-1014 / DSM 16622 / JCM 12645 / Bem) (Geobacter bemidjiensis).